The primary structure comprises 286 residues: 4-hydroxy-3-methylbut-2-enyl diphosphate reductase (286 aa).

Cys-12 lines the [4Fe-4S] cluster pocket. Positions 47 and 80 each coordinate (2E)-4-hydroxy-3-methylbut-2-enyl diphosphate. The dimethylallyl diphosphate site is built by His-47 and His-80. Isopentenyl diphosphate is bound by residues His-47 and His-80. Cys-102 contributes to the [4Fe-4S] cluster binding site. His-130 provides a ligand contact to (2E)-4-hydroxy-3-methylbut-2-enyl diphosphate. His-130 serves as a coordination point for dimethylallyl diphosphate. Isopentenyl diphosphate is bound at residue His-130. The active-site Proton donor is Glu-132. Residue Thr-170 participates in (2E)-4-hydroxy-3-methylbut-2-enyl diphosphate binding. Residue Cys-198 coordinates [4Fe-4S] cluster. The (2E)-4-hydroxy-3-methylbut-2-enyl diphosphate site is built by Ser-226, Asn-228, and Ser-270. Positions 226, 228, and 270 each coordinate dimethylallyl diphosphate. Isopentenyl diphosphate-binding residues include Ser-226, Asn-228, and Ser-270.

It belongs to the IspH family. The cofactor is [4Fe-4S] cluster.

It carries out the reaction isopentenyl diphosphate + 2 oxidized [2Fe-2S]-[ferredoxin] + H2O = (2E)-4-hydroxy-3-methylbut-2-enyl diphosphate + 2 reduced [2Fe-2S]-[ferredoxin] + 2 H(+). The enzyme catalyses dimethylallyl diphosphate + 2 oxidized [2Fe-2S]-[ferredoxin] + H2O = (2E)-4-hydroxy-3-methylbut-2-enyl diphosphate + 2 reduced [2Fe-2S]-[ferredoxin] + 2 H(+). It functions in the pathway isoprenoid biosynthesis; dimethylallyl diphosphate biosynthesis; dimethylallyl diphosphate from (2E)-4-hydroxy-3-methylbutenyl diphosphate: step 1/1. It participates in isoprenoid biosynthesis; isopentenyl diphosphate biosynthesis via DXP pathway; isopentenyl diphosphate from 1-deoxy-D-xylulose 5-phosphate: step 6/6. Its function is as follows. Catalyzes the conversion of 1-hydroxy-2-methyl-2-(E)-butenyl 4-diphosphate (HMBPP) into a mixture of isopentenyl diphosphate (IPP) and dimethylallyl diphosphate (DMAPP). Acts in the terminal step of the DOXP/MEP pathway for isoprenoid precursor biosynthesis. This is 4-hydroxy-3-methylbut-2-enyl diphosphate reductase from Desulfovibrio desulfuricans (strain ATCC 27774 / DSM 6949 / MB).